Reading from the N-terminus, the 194-residue chain is Peptidyl-tRNA hydrolase (194 aa).

Tyrosine 17 lines the tRNA pocket. Histidine 22 (proton acceptor) is an active-site residue. TRNA-binding residues include tyrosine 68, asparagine 70, and asparagine 116.

This sequence belongs to the PTH family. In terms of assembly, monomer.

Its subcellular location is the cytoplasm. It catalyses the reaction an N-acyl-L-alpha-aminoacyl-tRNA + H2O = an N-acyl-L-amino acid + a tRNA + H(+). In terms of biological role, hydrolyzes ribosome-free peptidyl-tRNAs (with 1 or more amino acids incorporated), which drop off the ribosome during protein synthesis, or as a result of ribosome stalling. Its function is as follows. Catalyzes the release of premature peptidyl moieties from peptidyl-tRNA molecules trapped in stalled 50S ribosomal subunits, and thus maintains levels of free tRNAs and 50S ribosomes. The protein is Peptidyl-tRNA hydrolase of Pseudomonas aeruginosa (strain LESB58).